A 346-amino-acid chain; its full sequence is MSMVSAFLKQAWFIENEEQEYIKAVKGSKGGPGSAVSPYPSFNPSSDVDALHKAITVKGVDEATIIEILTKRNNAQRQQIKAAYLQEKGKPLDEALKKALTGHLEDVALALLKTPARFDADELRAAMKGLGTDEDTLIEILTSRTNKEIREINRVYREELKRDLAKDITSDTSGDFQKALLSLAKGDRSEDFGVNDDLADSDARALYEAGERRKGTDVNVFNTILTTRSYPHLRRVFQMYTKYSKHDMNKVLDLEMKGDVENCFTAIVKCATSKPMFFAEKLHNAMKGAGTRDKILIRIMVSRSEVDMNDIKACYQKLYGISLCQAILDETKGDYEKILVALCGRD.

Ser-5 bears the Phosphoserine; by TRPM7 mark. Residue Gln-19 forms an Isoglutamyl lysine isopeptide (Gln-Lys) (interchain with K-?) linkage. Residue Tyr-21 is modified to Phosphotyrosine; by EGFR. Residues Ser-34 and Ser-37 each carry the phosphoserine modification. Annexin repeat units follow at residues 42–113, 114–185, 197–269, and 273–344; these read FNPS…ALLK, TPAR…SLAK, DLAD…AIVK, and SKPM…ALCG. Residue Lys-58 is modified to N6-acetyllysine. Positions 59, 60, 62, 97, 100, 105, 127, 129, 131, 132, and 134 each coordinate Ca(2+). A Phosphothreonine modification is found at Thr-136. Residues Asp-171, Gly-210, and Arg-213 each contribute to the Ca(2+) site. Lys-214 is covalently cross-linked (Glycyl lysine isopeptide (Lys-Gly) (interchain with G-Cter in SUMO1); alternate). Lys-214 participates in a covalent cross-link: Glycyl lysine isopeptide (Lys-Gly) (interchain with G-Cter in SUMO2); alternate. 4 residues coordinate Ca(2+): Gly-215, Asp-253, Glu-255, and Met-256. Lys-257 participates in a covalent cross-link: Glycyl lysine isopeptide (Lys-Gly) (interchain with G-Cter in SUMO1). The Ca(2+) site is built by Glu-261, Met-286, Gly-288, and Gly-290. Lys-312 is modified (N6-acetyllysine). A disulfide bond links Cys-324 and Cys-343. Ca(2+) is bound by residues Leu-328, Glu-330, and Thr-331. Lys-332 participates in a covalent cross-link: Glycyl lysine isopeptide (Lys-Gly) (interchain with G-Cter in SUMO1). Residue Glu-336 coordinates Ca(2+).

It belongs to the annexin family. In terms of assembly, homodimer; non-covalently linked. Homodimer; linked by transglutamylation. Homodimers linked by transglutamylation are observed in placenta, but not in other tissues. Interacts with S100A11. Heterotetramer, formed by two molecules each of S100A11 and ANXA1. Interacts with DYSF. Interacts with EGFR. In terms of processing, phosphorylated by protein kinase C, EGFR and TRPM7. Phosphorylated in response to EGF treatment. Sumoylated. Post-translationally, proteolytically cleaved by cathepsin CTSG to release the active N-terminal peptide Ac2-26.

The protein resides in the nucleus. Its subcellular location is the cytoplasm. The protein localises to the cell projection. It localises to the cilium. It is found in the basolateral cell membrane. The protein resides in the lateral cell membrane. Its subcellular location is the cell membrane. The protein localises to the apical cell membrane. It localises to the membrane. It is found in the early endosome. The protein resides in the cytoplasmic vesicle membrane. Its subcellular location is the endosome membrane. The protein localises to the secreted. It localises to the extracellular space. It is found in the extracellular exosome. The protein resides in the cytoplasmic vesicle. Its subcellular location is the secretory vesicle lumen. The protein localises to the phagocytic cup. Its function is as follows. Plays important roles in the innate immune response as effector of glucocorticoid-mediated responses and regulator of the inflammatory process. Has anti-inflammatory activity. Plays a role in glucocorticoid-mediated down-regulation of the early phase of the inflammatory response. Contributes to the adaptive immune response by enhancing signaling cascades that are triggered by T-cell activation, regulates differentiation and proliferation of activated T-cells. Promotes the differentiation of T-cells into Th1 cells and negatively regulates differentiation into Th2 cells. Has no effect on unstimulated T-cells. Negatively regulates hormone exocytosis via activation of the formyl peptide receptors and reorganization of the actin cytoskeleton. Has high affinity for Ca(2+) and can bind up to eight Ca(2+) ions. Displays Ca(2+)-dependent binding to phospholipid membranes. Plays a role in the formation of phagocytic cups and phagosomes. Plays a role in phagocytosis by mediating the Ca(2+)-dependent interaction between phagosomes and the actin cytoskeleton. Functions at least in part by activating the formyl peptide receptors and downstream signaling cascades. Promotes chemotaxis of granulocytes and monocytes via activation of the formyl peptide receptors. Promotes rearrangement of the actin cytoskeleton, cell polarization and cell migration. Promotes resolution of inflammation and wound healing. Acts via neutrophil N-formyl peptide receptors to enhance the release of CXCL2. The protein is Annexin A1 (ANXA1) of Equus caballus (Horse).